Here is a 213-residue protein sequence, read N- to C-terminus: NADH dehydrogenase [ubiquinone] iron-sulfur protein 7, mitochondrial (213 aa).

The N-terminal 37 residues, 1-37, are a transit peptide targeting the mitochondrion; it reads MAVLSAPGLRGFRILGLRSSVGPAVQARSVHQSVATD. A compositionally biased stretch (polar residues) spans 30–44; that stretch reads VHQSVATDGPSSTQP. Residues 30–53 are disordered; the sequence is VHQSVATDGPSSTQPALPKARAVA. Residues cysteine 88 and cysteine 89 each contribute to the [4Fe-4S] cluster site. A Hydroxyarginine modification is found at arginine 111. Positions 153 and 183 each coordinate [4Fe-4S] cluster.

This sequence belongs to the complex I 20 kDa subunit family. As to quaternary structure, core subunit of respiratory chain NADH dehydrogenase (Complex I) which is composed of 45 different subunits. This is a component of the iron-sulfur (IP) fragment of the enzyme. Requires [4Fe-4S] cluster as cofactor. Post-translationally, hydroxylated ar Arg-111 by NDUFAF5 early in the pathway of assembly of complex I, before the formation of the juncture between peripheral and membrane arms.

Its subcellular location is the mitochondrion inner membrane. It carries out the reaction a ubiquinone + NADH + 5 H(+)(in) = a ubiquinol + NAD(+) + 4 H(+)(out). Core subunit of the mitochondrial membrane respiratory chain NADH dehydrogenase (Complex I) which catalyzes electron transfer from NADH through the respiratory chain, using ubiquinone as an electron acceptor. Essential for the catalytic activity of complex I. The sequence is that of NADH dehydrogenase [ubiquinone] iron-sulfur protein 7, mitochondrial (NDUFS7) from Pan troglodytes (Chimpanzee).